A 122-amino-acid chain; its full sequence is Large ribosomal subunit protein uL14 (122 aa).

This sequence belongs to the universal ribosomal protein uL14 family. In terms of assembly, part of the 50S ribosomal subunit. Forms a cluster with proteins L3 and L19. In the 70S ribosome, L14 and L19 interact and together make contacts with the 16S rRNA in bridges B5 and B8.

Binds to 23S rRNA. Forms part of two intersubunit bridges in the 70S ribosome. This Mycoplasmopsis agalactiae (strain NCTC 10123 / CIP 59.7 / PG2) (Mycoplasma agalactiae) protein is Large ribosomal subunit protein uL14.